A 185-amino-acid chain; its full sequence is A-type ATP synthase subunit E (185 aa).

Belongs to the V-ATPase E subunit family. As to quaternary structure, has multiple subunits with at least A(3), B(3), C, D, E, F, H, I and proteolipid K(x).

The protein resides in the cell membrane. Component of the A-type ATP synthase that produces ATP from ADP in the presence of a proton gradient across the membrane. The sequence is that of A-type ATP synthase subunit E from Thermoplasma acidophilum (strain ATCC 25905 / DSM 1728 / JCM 9062 / NBRC 15155 / AMRC-C165).